The sequence spans 637 residues: Nucleoside triphosphatase I (637 aa).

The Helicase ATP-binding domain occupies 43–205; it reads FLGLNSMNSI…QMLVNLLRPG (163 aa). Residue 56-63 participates in ATP binding; sequence QETGVGKT. The DEXH box signature appears at 142-145; it reads DECH. Residues 358 to 537 enclose the Helicase C-terminal domain; the sequence is ELYNYLYEHS…QLYKVFKHSS (180 aa). The segment at 459 to 526 is binding to the cap-specific mRNA (nucleoside-2'-O-)-methyltransferase; sequence DIFILDMTWN…DIIQSKSKEF (68 aa).

This sequence belongs to the helicase family. NPH I subfamily. As to quaternary structure, monomer. Interacts (via C-terminus) with RAP94 (via N-terminus). Interacts with the cap-specific mRNA (nucleoside-2'-O-)-methyltransferase.

The protein resides in the virion. It carries out the reaction a ribonucleoside 5'-triphosphate + H2O = a ribonucleoside 5'-diphosphate + phosphate + H(+). DNA-dependent ATPase required for providing the needed energy to achieve the termination of early transcripts. Acts in concert with the RAP94 subunit of the virion RNA polymerase and the capping enzyme/VTF to catalyze release of UUUUUNU-containing nascent RNA from the elongation complex. NPH-I must bind ssDNA in order to exhibit ATPase activity. This chain is Nucleoside triphosphatase I (NPH1), found in Vertebrata (FPV).